Here is a 238-residue protein sequence, read N- to C-terminus: MQAVLLVVALFGAALADPPKKIHLPTPKVKRVEKLAHQEHGVNVVQAVPITKTVVRTVNVPKTLIQEVPIHVYTDLVLKSPVPRRKVIDIKKTVLQPHIRHVPVDQPYVVHRKVPVIHTKIVRQPRPVPRIVNIPRLKVVQKQINRIIDVPRLVTRERVHRVIKPVPVVRTRVQHVDVDVPMRVVVPEPVVQDRHTQSVETVPVPHDVVRKVKVPKTFVLKDLIPVPEKAGRHYSSDK.

Positions 1–16 are cleaved as a signal peptide; sequence MQAVLLVVALFGAALA.

Prismatic layer of shell (at protein level). Expressed primarily in the mantle with highest level in the mantle edge and lower level in the mantle pallium.

The protein localises to the secreted. This chain is Valine-rich protein, found in Pinctada maxima (Silver-lipped pearl oyster).